We begin with the raw amino-acid sequence, 260 residues long: 3'-5' ssDNA/RNA exonuclease TatD (260 aa).

A divalent metal cation-binding residues include Glu92, His128, and His153.

The protein belongs to the metallo-dependent hydrolases superfamily. TatD-type hydrolase family. TatD subfamily. Monomer. Requires Mg(2+) as cofactor.

The protein localises to the cytoplasm. Functionally, 3'-5' exonuclease that prefers single-stranded DNA and RNA. May play a role in the H(2)O(2)-induced DNA damage repair. The chain is 3'-5' ssDNA/RNA exonuclease TatD from Pantoea sp. (strain At-9b).